A 150-amino-acid chain; its full sequence is Flagellar assembly factor FliW (150 aa).

This sequence belongs to the FliW family. As to quaternary structure, interacts with translational regulator CsrA and flagellin(s).

The protein localises to the cytoplasm. Its function is as follows. Acts as an anti-CsrA protein, binds CsrA and prevents it from repressing translation of its target genes, one of which is flagellin. Binds to flagellin and participates in the assembly of the flagellum. This Leptospira interrogans serogroup Icterohaemorrhagiae serovar copenhageni (strain Fiocruz L1-130) protein is Flagellar assembly factor FliW.